We begin with the raw amino-acid sequence, 332 residues long: UDP-N-acetylenolpyruvoylglucosamine reductase (332 aa).

One can recognise an FAD-binding PCMH-type domain in the interval 15–184 (IDVSAACFLE…TYVSFRLSKR (170 aa)). Arg160 is a catalytic residue. Catalysis depends on Ser232, which acts as the Proton donor. Glu328 is a catalytic residue.

Belongs to the MurB family. The cofactor is FAD.

The protein localises to the cytoplasm. It carries out the reaction UDP-N-acetyl-alpha-D-muramate + NADP(+) = UDP-N-acetyl-3-O-(1-carboxyvinyl)-alpha-D-glucosamine + NADPH + H(+). It participates in cell wall biogenesis; peptidoglycan biosynthesis. Functionally, cell wall formation. This Bacteroides fragilis (strain ATCC 25285 / DSM 2151 / CCUG 4856 / JCM 11019 / LMG 10263 / NCTC 9343 / Onslow / VPI 2553 / EN-2) protein is UDP-N-acetylenolpyruvoylglucosamine reductase.